The chain runs to 304 residues: 33 kDa chaperonin (304 aa).

2 disulfides stabilise this stretch: cysteine 245-cysteine 247 and cysteine 278-cysteine 281.

The protein belongs to the HSP33 family. Post-translationally, under oxidizing conditions two disulfide bonds are formed involving the reactive cysteines. Under reducing conditions zinc is bound to the reactive cysteines and the protein is inactive.

The protein localises to the cytoplasm. Functionally, redox regulated molecular chaperone. Protects both thermally unfolding and oxidatively damaged proteins from irreversible aggregation. Plays an important role in the bacterial defense system toward oxidative stress. In Microcystis aeruginosa (strain NIES-843 / IAM M-2473), this protein is 33 kDa chaperonin.